Here is a 630-residue protein sequence, read N- to C-terminus: Arginine--tRNA ligase (630 aa).

A 'HIGH' region motif is present at residues 120–130 (ANPVHPLHIGH).

This sequence belongs to the class-I aminoacyl-tRNA synthetase family.

The protein localises to the cytoplasm. It carries out the reaction tRNA(Arg) + L-arginine + ATP = L-arginyl-tRNA(Arg) + AMP + diphosphate. This is Arginine--tRNA ligase from Pyrobaculum aerophilum (strain ATCC 51768 / DSM 7523 / JCM 9630 / CIP 104966 / NBRC 100827 / IM2).